Here is a 561-residue protein sequence, read N- to C-terminus: MELGAWRSILYIAFLFAITRHAFCKAVNLVHSPEGEEFENILSSVSATVEKKEVNNKLIMPTANRDNQGVREELLVSSFKERKLLNTNSANLRLNSIGSYEMIDFKQINSEFFLSHRQHGFVLFIDSKKKPRQSFYTDSATSIVQLSKKYRNKIKFKSVDCASSLEKCEEIGINSFPSLVYYNNAGQKKVFTAHTPYEVLSKHADLITELDETDGKVYPQSIIRLEEFKNLKANEPVFFLYLHDYGSTPEDFDSLRIFARYLVGFAPLYRTDDEKVIKTLNVTRLPHLVAIRHGVAFSYSERSVSAMRNTFQLIKWASLLKYPLVPELTPAVVENLDSDSYLAIALINPTSQVKASKAISTVQEIGLKWTLKLREVERKQLLTAREKWWDHLRMLKQKGYDDVAFLAAEYSLPLPKNKKVTFVWVNSLQWKTWISHTFHIDPMGPSRFVLMDPSRMFYWDSSAKGLPLTLDDSSLILDTTFRVLAITGEGLPHEFSIPRGYVYLSEIKQYSSLILISLWISLILFVSFLNRRLILHYSFESVHQLKTLTRKFIYSSLLKQD.

Positions methionine 1 to cysteine 24 are cleaved as a signal peptide. At lysine 25–glutamine 509 the chain is on the lumenal side. Residues tyrosine 510–asparagine 530 traverse the membrane as a helical segment. The Cytoplasmic segment spans residues arginine 531–aspartate 561.

It is found in the endoplasmic reticulum membrane. It localises to the golgi apparatus membrane. This is an uncharacterized protein from Schizosaccharomyces pombe (strain 972 / ATCC 24843) (Fission yeast).